Reading from the N-terminus, the 286-residue chain is Uridylate cyclase (286 aa).

The Guanylate cyclase domain occupies 90 to 223 (TAIFVDIRKS…DAVTKAANMS (134 aa)). A ribonucleoside 5'-triphosphate is bound at residue Phe93. Positions 95, 96, and 140 each coordinate Mn(2+).

This sequence belongs to the adenylyl cyclase class-4/guanylyl cyclase family. Pyrimidine cyclase subfamily. As to quaternary structure, homodimer. Mn(2+) serves as cofactor.

It is found in the cytoplasm. It catalyses the reaction UTP = 3',5'-cyclic UMP + diphosphate. Functionally, pycsar (pyrimidine cyclase system for antiphage resistance) provides immunity against bacteriophage. The pyrimidine cyclase (PycC) synthesizes cyclic nucleotides in response to infection; these serve as specific second messenger signals. The signals activate the adjacent effector, leading to bacterial cell death and abortive phage infection. A clade C Pycsar system. Its function is as follows. The pyrimidine cyclase gene of a two-gene Pycsar system, weakly generates cyclic UMP (cUMP) from UTP, has little to no activity on ATP, CTP or GTP. Expression of this and adjacent effector TpPycTM (AC A0A1T4LJG1) probably confers resistance to bacteriophage. The genes are probably only expressed in response to bacteriophage infection. The polypeptide is Uridylate cyclase (Treponema porcinum).